A 343-amino-acid chain; its full sequence is Anthranilate phosphoribosyltransferase (343 aa).

5-phospho-alpha-D-ribose 1-diphosphate is bound by residues Gly77, 80–81 (GD), Thr85, 87–90 (NVST), 105–113 (KHGNRSSSG), and Ser117. Gly77 lines the anthranilate pocket. Ser89 lines the Mg(2+) pocket. Residue Asn108 participates in anthranilate binding. Arg163 contacts anthranilate. Positions 222 and 223 each coordinate Mg(2+).

Belongs to the anthranilate phosphoribosyltransferase family. In terms of assembly, homodimer. Mg(2+) serves as cofactor.

It catalyses the reaction N-(5-phospho-beta-D-ribosyl)anthranilate + diphosphate = 5-phospho-alpha-D-ribose 1-diphosphate + anthranilate. Its pathway is amino-acid biosynthesis; L-tryptophan biosynthesis; L-tryptophan from chorismate: step 2/5. Functionally, catalyzes the transfer of the phosphoribosyl group of 5-phosphorylribose-1-pyrophosphate (PRPP) to anthranilate to yield N-(5'-phosphoribosyl)-anthranilate (PRA). This is Anthranilate phosphoribosyltransferase from Cenarchaeum symbiosum (strain A).